We begin with the raw amino-acid sequence, 784 residues long: 5-methyltetrahydropteroyltriglutamate--homocysteine methyltransferase (784 aa).

5-methyltetrahydropteroyltri-L-glutamate is bound by residues 16-19 and K112; that span reads RELK. Residues 460–462 and E513 contribute to the L-homocysteine site; that span reads IGS. Residues 460–462 and E513 each bind L-methionine; that span reads IGS. Position 590 (W590) interacts with 5-methyltetrahydropteroyltri-L-glutamate. D628 contacts L-homocysteine. D628 contacts L-methionine. E634 is a binding site for 5-methyltetrahydropteroyltri-L-glutamate. Zn(2+) is bound by residues H670, C672, and E694. H723 functions as the Proton donor in the catalytic mechanism. C755 is a binding site for Zn(2+).

The protein belongs to the vitamin-B12 independent methionine synthase family. The cofactor is Zn(2+).

It catalyses the reaction 5-methyltetrahydropteroyltri-L-glutamate + L-homocysteine = tetrahydropteroyltri-L-glutamate + L-methionine. Its pathway is amino-acid biosynthesis; L-methionine biosynthesis via de novo pathway; L-methionine from L-homocysteine (MetE route): step 1/1. Functionally, catalyzes the transfer of a methyl group from 5-methyltetrahydrofolate to homocysteine resulting in methionine formation. The protein is 5-methyltetrahydropteroyltriglutamate--homocysteine methyltransferase of Acidithiobacillus ferrooxidans (strain ATCC 23270 / DSM 14882 / CIP 104768 / NCIMB 8455) (Ferrobacillus ferrooxidans (strain ATCC 23270)).